The following is a 406-amino-acid chain: MKFVDEVSIFVKAGDGGNGMMSFRREKFIEKGGPNGGDGGDGGSVFLEADENLNTLIDYRYTRKFHAQNGEKGGSTDCTGAKGEDLILPVPVGTTVIDVATQEVIGDLVKPGQRLMVAQGGWHGLGNTRFKSSTNRAPRQTTPGKPGESRDLKLELKVLADVGLLGLPNAGKSTFIRAVSAAKPKVADYPFTTLVPNLGVVSVDRFKSFVVADIPGLIEGASEGAGLGIRFLKHLARTRLLLHLVDMAPLDESDPAEAAQVIIDELGRFSPALAERDRWLVLNKMDQIPEDEREARKADIVARLGWQGPVYVVSAISRDGTERICRDIMHYLEVRAERIAEDPVFAEELAELDQRIEDEARARLQALDDQRALRKSGVRSVDDIDEDDDFFDDEDDDGPEIIYVRD.

The 159-residue stretch at 1-159 (MKFVDEVSIF…RDLKLELKVL (159 aa)) folds into the Obg domain. The disordered stretch occupies residues 126 to 149 (GNTRFKSSTNRAPRQTTPGKPGES). Residues 129-143 (RFKSSTNRAPRQTTP) are compositionally biased toward polar residues. The OBG-type G domain maps to 160–333 (ADVGLLGLPN…ICRDIMHYLE (174 aa)). GTP-binding positions include 166–173 (GLPNAGKS), 191–195 (FTTLV), 213–216 (DIPG), 283–286 (NKMD), and 314–316 (SAI). Mg(2+) contacts are provided by S173 and T193. The disordered stretch occupies residues 376–406 (SGVRSVDDIDEDDDFFDDEDDDGPEIIYVRD). Residues 383–399 (DIDEDDDFFDDEDDDGP) show a composition bias toward acidic residues.

The protein belongs to the TRAFAC class OBG-HflX-like GTPase superfamily. OBG GTPase family. Monomer. Mg(2+) is required as a cofactor.

It localises to the cytoplasm. Functionally, an essential GTPase which binds GTP, GDP and possibly (p)ppGpp with moderate affinity, with high nucleotide exchange rates and a fairly low GTP hydrolysis rate. Plays a role in control of the cell cycle, stress response, ribosome biogenesis and in those bacteria that undergo differentiation, in morphogenesis control. In Ectopseudomonas mendocina (strain ymp) (Pseudomonas mendocina), this protein is GTPase Obg.